A 189-amino-acid chain; its full sequence is MASSIMALSSTAAVAAVAAPSKTGNSNVVSAFTGLKSMAQFPSSKTMSNAGAEWEQKTTSNGSRVRCMQVWPPYANKKFETLSYLPRLTPEQLVKEVEYLLKNKWVPCLEFEEDGEIKRVYGNSPGYYDGRYWVMWKLPMFGCTEASQVLNEVNECAKAYPNAFIRVIGFDNVRQVQCISFIVHKPEYN.

The N-terminal 66 residues, 1–66 (MASSIMALSS…KTTSNGSRVR (66 aa)), are a transit peptide targeting the chloroplast.

It belongs to the RuBisCO small chain family. As to quaternary structure, heterohexadecamer of 8 large and 8 small subunits.

The protein localises to the plastid. Its subcellular location is the chloroplast. In terms of biological role, ruBisCO catalyzes two reactions: the carboxylation of D-ribulose 1,5-bisphosphate, the primary event in carbon dioxide fixation, as well as the oxidative fragmentation of the pentose substrate. Both reactions occur simultaneously and in competition at the same active site. Although the small subunit is not catalytic it is essential for maximal activity. The polypeptide is Ribulose bisphosphate carboxylase small subunit, chloroplastic (Larix laricina (Tamarack)).